The sequence spans 151 residues: Small ribosomal subunit protein uS15 (151 aa).

Position 27 is an N6-acetyllysine; alternate (lysine 27). The residue at position 27 (lysine 27) is an N6-succinyllysine; alternate. Residue lysine 27 forms a Glycyl lysine isopeptide (Lys-Gly) (interchain with G-Cter in ubiquitin) linkage. Position 30 is a phosphoserine (serine 30). Lysine 34 bears the N6-succinyllysine mark. Position 38 is a phosphotyrosine (tyrosine 38). Residue lysine 43 forms a Glycyl lysine isopeptide (Lys-Gly) (interchain with G-Cter in SUMO2) linkage.

This sequence belongs to the universal ribosomal protein uS15 family. In terms of assembly, component of the small ribosomal subunit. Part of the small subunit (SSU) processome, composed of more than 70 proteins and the RNA chaperone small nucleolar RNA (snoRNA) U3. Ubiquitinated at Lys-27 by RNF14 and RNF25 in response to ribosome collisions (ribosome stalling).

The protein resides in the cytoplasm. It is found in the nucleus. It localises to the nucleolus. Functionally, component of the small ribosomal subunit. The ribosome is a large ribonucleoprotein complex responsible for the synthesis of proteins in the cell. Part of the small subunit (SSU) processome, first precursor of the small eukaryotic ribosomal subunit. During the assembly of the SSU processome in the nucleolus, many ribosome biogenesis factors, an RNA chaperone and ribosomal proteins associate with the nascent pre-rRNA and work in concert to generate RNA folding, modifications, rearrangements and cleavage as well as targeted degradation of pre-ribosomal RNA by the RNA exosome. This chain is Small ribosomal subunit protein uS15, found in Homo sapiens (Human).